Reading from the N-terminus, the 196-residue chain is Putative 3-methyladenine DNA glycosylase (196 aa).

Belongs to the DNA glycosylase MPG family.

The sequence is that of Putative 3-methyladenine DNA glycosylase from Chlorobium phaeobacteroides (strain DSM 266 / SMG 266 / 2430).